The sequence spans 217 residues: LexA repressor (217 aa).

The H-T-H motif DNA-binding region spans 28–48 (RAEIAAEFGFSSPNAAEEHLR). Active-site for autocatalytic cleavage activity residues include serine 136 and lysine 173.

Belongs to the peptidase S24 family. In terms of assembly, homodimer.

The catalysed reaction is Hydrolysis of Ala-|-Gly bond in repressor LexA.. In terms of biological role, represses a number of genes involved in the response to DNA damage (SOS response), including recA and lexA. In the presence of single-stranded DNA, RecA interacts with LexA causing an autocatalytic cleavage which disrupts the DNA-binding part of LexA, leading to derepression of the SOS regulon and eventually DNA repair. The polypeptide is LexA repressor (Cupriavidus necator (strain ATCC 17699 / DSM 428 / KCTC 22496 / NCIMB 10442 / H16 / Stanier 337) (Ralstonia eutropha)).